A 79-amino-acid polypeptide reads, in one-letter code: UPF0337 protein YhjA (79 aa).

The interval 1-30 (MALNDKLDATKDKVSGKVKETTGKVTGDEK) is disordered.

It belongs to the UPF0337 (CsbD) family.

This chain is UPF0337 protein YhjA (yhjA), found in Lactococcus lactis subsp. lactis (strain IL1403) (Streptococcus lactis).